A 328-amino-acid polypeptide reads, in one-letter code: MTGSNEFKLNQPPEDGISSVKFSPNTSQFLLVSSWDTSVRLYDVPANSMRLKYQHTGAVLDCAFYDPTHAWSGGLDHQLKMHDLNTDQENLVGTHDAPIRCVEYCPEVNVMVTGSWDQTVKLWDPRTPCNAGTFSQPEKVYTLSVSGDRLIVGTAGRRVLVWDLRNMGYVQQRRESSLKYQTRCIRAFPNKQGYVLSSIEGRVAVEYLDPSPEVQKKKYAFKCHRLKENNIEQIYPVNAISFHNIHNTFATGGSDGFVNIWDPFNKKRLCQFHRYPTSIASLAFSNDGTTLAIASSYMYEMDDTEHPEDGIFIRQVTDAETKPKSPCT.

WD repeat units lie at residues 4-44 (SNEF…LYDV), 47-84 (NSMR…MHDL), 87-125 (DQEN…LWDP), 129-164 (CNAG…VWDL), and 170-210 (VQQR…YLDP). Lys-179 carries the post-translational modification N6-acetyllysine. Phosphoserine is present on Ser-211. A Glycyl lysine isopeptide (Lys-Gly) (interchain with G-Cter in ubiquitin) cross-link involves residue Lys-216. WD repeat units lie at residues 217–263 (KKYA…IWDP) and 267–316 (KRLC…IRQV).

This sequence belongs to the WD repeat BUB3 family. As to quaternary structure, interacts with BUB1 and BUBR1. The BUB1/BUB3 complex interacts with MAD1L1. Interacts with ZNF207/BuGZ; leading to promote stability and kinetochore loading of BUB3. Poly-ADP-ribosylated by PARP1. Post-translationally, ubiquitinated by UBR5, promoting disassembly of the mitotic checkpoint complex from the APC/C complex.

Its subcellular location is the nucleus. The protein resides in the chromosome. It localises to the centromere. It is found in the kinetochore. In terms of biological role, has a dual function in spindle-assembly checkpoint signaling and in promoting the establishment of correct kinetochore-microtubule (K-MT) attachments. Promotes the formation of stable end-on bipolar attachments. Necessary for kinetochore localization of BUB1. Regulates chromosome segregation during oocyte meiosis. The BUB1/BUB3 complex plays a role in the inhibition of anaphase-promoting complex or cyclosome (APC/C) when spindle-assembly checkpoint is activated and inhibits the ubiquitin ligase activity of APC/C by phosphorylating its activator CDC20. This complex can also phosphorylate MAD1L1. The chain is Mitotic checkpoint protein BUB3 (BUB3) from Homo sapiens (Human).